Consider the following 396-residue polypeptide: 8-amino-7-oxononanoate synthase (396 aa).

Arg-21 contributes to the substrate binding site. A pyridoxal 5'-phosphate-binding site is contributed by 112-113 (GY). His-137 provides a ligand contact to substrate. Pyridoxal 5'-phosphate is bound by residues Ser-183, His-211, and Thr-239. Lys-242 is modified (N6-(pyridoxal phosphate)lysine). Thr-358 is a binding site for substrate.

Belongs to the class-II pyridoxal-phosphate-dependent aminotransferase family. BioF subfamily. As to quaternary structure, homodimer. It depends on pyridoxal 5'-phosphate as a cofactor.

It catalyses the reaction 6-carboxyhexanoyl-[ACP] + L-alanine + H(+) = (8S)-8-amino-7-oxononanoate + holo-[ACP] + CO2. The protein operates within cofactor biosynthesis; biotin biosynthesis. Functionally, catalyzes the decarboxylative condensation of pimeloyl-[acyl-carrier protein] and L-alanine to produce 8-amino-7-oxononanoate (AON), [acyl-carrier protein], and carbon dioxide. The protein is 8-amino-7-oxononanoate synthase of Bordetella petrii (strain ATCC BAA-461 / DSM 12804 / CCUG 43448).